The following is a 134-amino-acid chain: Small ribosomal subunit protein uS8 (134 aa).

Belongs to the universal ribosomal protein uS8 family. In terms of assembly, part of the 30S ribosomal subunit. Contacts proteins S5 and S12.

Functionally, one of the primary rRNA binding proteins, it binds directly to 16S rRNA central domain where it helps coordinate assembly of the platform of the 30S subunit. In Thermotoga neapolitana (strain ATCC 49049 / DSM 4359 / NBRC 107923 / NS-E), this protein is Small ribosomal subunit protein uS8.